We begin with the raw amino-acid sequence, 1338 residues long: Phosphoribosylformylglycinamidine synthase (1338 aa).

Serine 215 is modified (phosphoserine). ATP-binding positions include glycine 322–aspartate 333 and alanine 402–phenylalanine 404. At serine 569 the chain carries Phosphoserine. A phosphothreonine mark is found at threonine 619 and threonine 623. An ATP-binding site is contributed by alanine 706. Mg(2+) contacts are provided by aspartate 707, glutamate 746, asparagine 750, and aspartate 909. Position 911 (serine 911) interacts with ATP. A Glutamine amidotransferase type-1 domain is found at arginine 1064–valine 1302. Residue cysteine 1158 is the Nucleophile of the active site. Catalysis depends on residues histidine 1297 and glutamate 1299.

This sequence in the N-terminal section; belongs to the FGAMS family.

Its subcellular location is the cytoplasm. The enzyme catalyses N(2)-formyl-N(1)-(5-phospho-beta-D-ribosyl)glycinamide + L-glutamine + ATP + H2O = 2-formamido-N(1)-(5-O-phospho-beta-D-ribosyl)acetamidine + L-glutamate + ADP + phosphate + H(+). Its pathway is purine metabolism; IMP biosynthesis via de novo pathway; 5-amino-1-(5-phospho-D-ribosyl)imidazole from N(2)-formyl-N(1)-(5-phospho-D-ribosyl)glycinamide: step 1/2. Phosphoribosylformylglycinamidine synthase involved in the purines biosynthetic pathway. Catalyzes the ATP-dependent conversion of formylglycinamide ribonucleotide (FGAR) and glutamine to yield formylglycinamidine ribonucleotide (FGAM) and glutamate. The protein is Phosphoribosylformylglycinamidine synthase (PFAS) of Homo sapiens (Human).